Consider the following 320-residue polypeptide: tRNA U34 carboxymethyltransferase (320 aa).

Carboxy-S-adenosyl-L-methionine-binding positions include K87, W101, K106, G126, 148 to 150, 176 to 177, M192, Y196, and R311; these read EPS and VE.

The protein belongs to the class I-like SAM-binding methyltransferase superfamily. CmoB family. Homotetramer.

It carries out the reaction carboxy-S-adenosyl-L-methionine + 5-hydroxyuridine(34) in tRNA = 5-carboxymethoxyuridine(34) in tRNA + S-adenosyl-L-homocysteine + H(+). Its function is as follows. Catalyzes carboxymethyl transfer from carboxy-S-adenosyl-L-methionine (Cx-SAM) to 5-hydroxyuridine (ho5U) to form 5-carboxymethoxyuridine (cmo5U) at position 34 in tRNAs. This Desulfotalea psychrophila (strain LSv54 / DSM 12343) protein is tRNA U34 carboxymethyltransferase.